Reading from the N-terminus, the 732-residue chain is Cyclopenase asqI (732 aa).

H168, H172, and H200 together coordinate Zn(2+).

The protein belongs to the tyrosinase family. Requires Zn(2+) as cofactor.

It carries out the reaction (-)-cyclopenine = viridicatin + methyl isocyanate + H(+). It catalyses the reaction (-)-4'-methoxycyclopenine = 4'-methoxyviridicatin + methyl isocyanate + H(+). The protein operates within secondary metabolite biosynthesis. It functions in the pathway alkaloid biosynthesis. It participates in mycotoxin biosynthesis. In terms of biological role, cyclopenase; part of the gene cluster that mediates the biosynthesis of the aspoquinolone mycotoxins. Within the pathway, the cyclopenase asqI catalyzes the conversion of 4'-methoxycyclopenin into 4'-methoxyviridicatin. Cyclopenin can also be converted into viridicatin by asqI. The first step of the pathway is catalyzed by the nonribosomal peptide synthetase asqK that condenses anthranilic acid and O-methyl-L-tyrosine to produce 4'-methoxycyclopeptin. 4'-methoxycyclopeptin is then converted to 4'-methoxydehydrocyclopeptin by the ketoglutarate-dependent dioxygenase asqJ. AsqJ also converts its first product 4'-methoxydehydrocyclopeptin to 4'-methoxycyclopenin. The following conversion of 4'-methoxycyclopenin into 4'-methoxyviridicatin is catalyzed by the cyclopenase asqI. 4'-methoxyviridicatin is the precursor of quinolone natural products, and is further converted to quinolinone B. The prenyltransferase asqH1 then catalyzes the canonical Friedel-Crafts alkylation of quinolinone B with dimethylallyl cation to yield dimethylallyl quinolone, which is subjected to FAD-dependent dehydrogenation by the FAD-linked oxidoreductase asqF to yield conjugated aryl diene. The delta(3') double bond then serves as the site of the second alkylation with DMAPP catalyzed by the prenyltransferase asqH2 to yield a carbenium ion intermediate, which can be attacked by H(2)O to yield a styrenyl quinolone containing a C3'-hydroxyprenyl chain. The FAD-dependent monooxygenase asqG performs epoxidation of the terminal C7'-C8' olefin. Finally, after dehydratation of the epoxide at C3 by asqC, the quinolone epoxide rearrangement protein asqO catalyzes an enzymatic 3-exo-tet cyclization to yield the cyclopropyl-THF ring system in aspoquinolone. This Emericella nidulans (strain FGSC A4 / ATCC 38163 / CBS 112.46 / NRRL 194 / M139) (Aspergillus nidulans) protein is Cyclopenase asqI.